A 765-amino-acid polypeptide reads, in one-letter code: Phosphoribosylformylglycinamidine synthase subunit PurL (765 aa).

The segment covering 1–13 (MTVSPTSAPTQAI) has biased composition (polar residues). Positions 1–32 (MTVSPTSAPTQAIDTVERAATTPDEPQPFGEL) are disordered. Residue H65 is part of the active site. 2 residues coordinate ATP: Y68 and K112. E114 is a Mg(2+) binding site. Residues 115–118 (SHNH) and R137 contribute to the substrate site. Catalysis depends on H116, which acts as the Proton acceptor. D138 is a Mg(2+) binding site. Q263 provides a ligand contact to substrate. D291 is a binding site for Mg(2+). Position 335–337 (335–337 (ESQ)) interacts with substrate. ATP contacts are provided by N523 and G560. Position 561 (N561) interacts with Mg(2+). S563 lines the substrate pocket.

Belongs to the FGAMS family. As to quaternary structure, monomer. Part of the FGAM synthase complex composed of 1 PurL, 1 PurQ and 2 PurS subunits.

Its subcellular location is the cytoplasm. It carries out the reaction N(2)-formyl-N(1)-(5-phospho-beta-D-ribosyl)glycinamide + L-glutamine + ATP + H2O = 2-formamido-N(1)-(5-O-phospho-beta-D-ribosyl)acetamidine + L-glutamate + ADP + phosphate + H(+). The protein operates within purine metabolism; IMP biosynthesis via de novo pathway; 5-amino-1-(5-phospho-D-ribosyl)imidazole from N(2)-formyl-N(1)-(5-phospho-D-ribosyl)glycinamide: step 1/2. In terms of biological role, part of the phosphoribosylformylglycinamidine synthase complex involved in the purines biosynthetic pathway. Catalyzes the ATP-dependent conversion of formylglycinamide ribonucleotide (FGAR) and glutamine to yield formylglycinamidine ribonucleotide (FGAM) and glutamate. The FGAM synthase complex is composed of three subunits. PurQ produces an ammonia molecule by converting glutamine to glutamate. PurL transfers the ammonia molecule to FGAR to form FGAM in an ATP-dependent manner. PurS interacts with PurQ and PurL and is thought to assist in the transfer of the ammonia molecule from PurQ to PurL. The sequence is that of Phosphoribosylformylglycinamidine synthase subunit PurL from Mycolicibacterium paratuberculosis (strain ATCC BAA-968 / K-10) (Mycobacterium paratuberculosis).